We begin with the raw amino-acid sequence, 1024 residues long: Non-canonical nonribosomal peptide synthetase FrzA (1024 aa).

An adenylation (A) domain region spans residues 29-425 (RAQKSHQAIA…GRRDHQVKVR (397 aa)). The Carrier domain maps to 534-611 (NASQDVRSAL…ALTSIIKQRL (78 aa)). Position 571 is an O-(pantetheine 4'-phosphoryl)serine (serine 571). A Thioester reductase (TE) domain is found at 655-898 (LTGGTGFVGA…VPVDYVNAAI (244 aa)).

Belongs to the NRP synthetase family. It depends on pantetheine 4'-phosphate as a cofactor.

The catalysed reaction is L-tyrosinal + AMP + diphosphate + NADP(+) = L-tyrosine + ATP + NADPH + H(+). It functions in the pathway secondary metabolite biosynthesis. Its function is as follows. Non-canonical nonribosomal peptide synthetase; part of the gene cluster that mediates the biosynthesis of the alkaloid (-)-FR901483, a potent immunosuppressant that shows efficacy in animal models and a probable inhibitor of purine nucleotide biosynthesis by targeting phosphoribosylpyrophosphate amidotransferase (PPAT). Within the pathway, FrzA catalyzes the reduction of L-tyrosine via its C-terminal reductase domain to produce L-tyrosinal. The biosynthesis of (-)-FR901483 starts with the condensation of two L-tyrosines to yield (S,S)-dityrosyl-piperazine. This process occurs in 3 steps with the non-canonical nonribosomal peptide synthetase FrzA catalyzing the reduction of L-tyrosine into L-tyrosinal, the spontaneous condensation of 2 L-tyrosinal units, and the subsequent reduction by the NmrA-like family domain-containing oxidoreductase FrzB. The cytochrome P450 monooxygenase FrzC then performs coupling between N10 and C1' to morph the piperazine into a 1,4-diazabicyclo[3.2.1]octane spiro-fused to a 2,5-cyclohexadienone. The dienone portion is further reduced to cyclohexanone by the flavin-dependent reductase FrzD. The methyltranserases (MTs) FrzE and FrzF are then involved in the methylation at the C10' amine and the C4 phenolic oxygen, respectively. The order of the two MTs appear to be interchangeable. Cleavage of the C9-N10' bond by the dioxygenase FrzG then leads to formation of a conjugated iminium. In addition to the oxidation of C9, an additional dehydrogenation between C7 and C8 can occur to give a likely shunt product. The next biosynthetic step is the intramolecular aldol condensation catalyzed by the newly identified aldolase FrzH to yield an aza-tricyclic product with the formation of a C9-C3' bond. The short-chain dehydrogenase/reductase FrzI then produces dephospho-(-)-FR901483 that is phosphorylated at C4'-OH into (-)-FR901483 by the phosphotransferase FrzJ. This is Non-canonical nonribosomal peptide synthetase FrzA from Cladobotryum sp.